The chain runs to 147 residues: Lysozyme C-1 (147 aa).

The first 18 residues, 1 to 18, serve as a signal peptide directing secretion; sequence MKALIILGLLCLSVAVQG. The C-type lysozyme domain occupies 19-147; it reads KVFERCELAR…VSSYVEGCSL (129 aa). 4 disulfides stabilise this stretch: Cys24-Cys145, Cys48-Cys133, Cys83-Cys99, and Cys95-Cys113. Residues Glu53 and Asp71 contribute to the active site.

Belongs to the glycosyl hydrolase 22 family. In terms of assembly, monomer. Expressed in stomach.

It localises to the secreted. The enzyme catalyses Hydrolysis of (1-&gt;4)-beta-linkages between N-acetylmuramic acid and N-acetyl-D-glucosamine residues in a peptidoglycan and between N-acetyl-D-glucosamine residues in chitodextrins.. In terms of biological role, lysozymes have primarily a bacteriolytic function; those in tissues and body fluids are associated with the monocyte-macrophage system and enhance the activity of immunoagents. In Ovis aries (Sheep), this protein is Lysozyme C-1.